A 286-amino-acid chain; its full sequence is Probable 4-deoxy-4-formamido-L-arabinose-phosphoundecaprenol deformylase ArnD (286 aa).

The region spanning 1-248 (MGTKLGVPNL…IAINEGINFC (248 aa)) is the NodB homology domain.

Belongs to the polysaccharide deacetylase family. ArnD deformylase subfamily.

It carries out the reaction 4-deoxy-4-formamido-alpha-L-arabinopyranosyl di-trans,octa-cis-undecaprenyl phosphate + H2O = 4-amino-4-deoxy-alpha-L-arabinopyranosyl di-trans,octa-cis-undecaprenyl phosphate + formate. Its pathway is glycolipid biosynthesis; 4-amino-4-deoxy-alpha-L-arabinose undecaprenyl phosphate biosynthesis; 4-amino-4-deoxy-alpha-L-arabinose undecaprenyl phosphate from UDP-4-deoxy-4-formamido-beta-L-arabinose and undecaprenyl phosphate: step 2/2. It participates in bacterial outer membrane biogenesis; lipopolysaccharide biosynthesis. Catalyzes the deformylation of 4-deoxy-4-formamido-L-arabinose-phosphoundecaprenol to 4-amino-4-deoxy-L-arabinose-phosphoundecaprenol. The modified arabinose is attached to lipid A and is required for resistance to polymyxin and cationic antimicrobial peptides. The protein is Probable 4-deoxy-4-formamido-L-arabinose-phosphoundecaprenol deformylase ArnD of Wigglesworthia glossinidia brevipalpis.